We begin with the raw amino-acid sequence, 254 residues long: Protein Thf1 (254 aa).

A coiled-coil region spans residues 182–241; the sequence is EEKMKKDLDLYRSNLEKMNQVLEVLEDALAVERQRREKAEAEAKAKTAEATVATETNDEQ. Positions 215–228 are enriched in basic and acidic residues; that stretch reads QRREKAEAEAKAKT. The tract at residues 215-254 is disordered; sequence QRREKAEAEAKAKTAEATVATETNDEQDEQKETSESGSDA.

This sequence belongs to the THF1 family.

Functionally, may be involved in photosynthetic membrane biogenesis. The polypeptide is Protein Thf1 (Picosynechococcus sp. (strain ATCC 27264 / PCC 7002 / PR-6) (Agmenellum quadruplicatum)).